The primary structure comprises 305 residues: UDP-3-O-acyl-N-acetylglucosamine deacetylase (305 aa).

3 residues coordinate Zn(2+): histidine 78, histidine 237, and aspartate 241. Residue histidine 264 is the Proton donor of the active site.

The protein belongs to the LpxC family. The cofactor is Zn(2+).

It catalyses the reaction a UDP-3-O-[(3R)-3-hydroxyacyl]-N-acetyl-alpha-D-glucosamine + H2O = a UDP-3-O-[(3R)-3-hydroxyacyl]-alpha-D-glucosamine + acetate. The protein operates within glycolipid biosynthesis; lipid IV(A) biosynthesis; lipid IV(A) from (3R)-3-hydroxytetradecanoyl-[acyl-carrier-protein] and UDP-N-acetyl-alpha-D-glucosamine: step 2/6. Functionally, catalyzes the hydrolysis of UDP-3-O-myristoyl-N-acetylglucosamine to form UDP-3-O-myristoylglucosamine and acetate, the committed step in lipid A biosynthesis. The chain is UDP-3-O-acyl-N-acetylglucosamine deacetylase from Burkholderia cenocepacia (strain ATCC BAA-245 / DSM 16553 / LMG 16656 / NCTC 13227 / J2315 / CF5610) (Burkholderia cepacia (strain J2315)).